The chain runs to 277 residues: MALKTFNPTTPGQRQLVMVDRSALYKGKPVKALTEGKRGKGGRNNTGRITVRFRGGGHKQAYRNVDFKRGKEDVPAIVERLEYDPNRTAFIALIKYQDGEQAYILAPQRLAVGDTVVAGNYVDVKPGNVMPLGNMPVGTIVHNVEMKIGKGGQLARSAGTYAQIVGRDHDYVILRLNSGEQRLVHGRCRGAIGAVSNPDHMNTSIGKAGRTRWMGRRPHNRGVVMNPIDHPHGGGEGRTSGGRHPVTPWGKPTKGKKTRSNKSTNKFILISRHKRKK.

A disordered region spans residues 223–277 (VVMNPIDHPHGGGEGRTSGGRHPVTPWGKPTKGKKTRSNKSTNKFILISRHKRKK).

This sequence belongs to the universal ribosomal protein uL2 family. In terms of assembly, part of the 50S ribosomal subunit. Forms a bridge to the 30S subunit in the 70S ribosome.

Its function is as follows. One of the primary rRNA binding proteins. Required for association of the 30S and 50S subunits to form the 70S ribosome, for tRNA binding and peptide bond formation. It has been suggested to have peptidyltransferase activity; this is somewhat controversial. Makes several contacts with the 16S rRNA in the 70S ribosome. The protein is Large ribosomal subunit protein uL2 of Nitrobacter hamburgensis (strain DSM 10229 / NCIMB 13809 / X14).